The sequence spans 284 residues: Pantothenate synthetase (284 aa).

30–37 (MGNLHNAH) is a binding site for ATP. Residue His-37 is the Proton donor of the active site. Gln-61 provides a ligand contact to (R)-pantoate. Gln-61 contributes to the beta-alanine binding site. Residue 149–152 (GIKD) coordinates ATP. Gln-155 lines the (R)-pantoate pocket. Residues Val-178 and 186–189 (MSSR) each bind ATP.

The protein belongs to the pantothenate synthetase family. In terms of assembly, homodimer.

The protein resides in the cytoplasm. The enzyme catalyses (R)-pantoate + beta-alanine + ATP = (R)-pantothenate + AMP + diphosphate + H(+). Its pathway is cofactor biosynthesis; (R)-pantothenate biosynthesis; (R)-pantothenate from (R)-pantoate and beta-alanine: step 1/1. Functionally, catalyzes the condensation of pantoate with beta-alanine in an ATP-dependent reaction via a pantoyl-adenylate intermediate. This Saccharophagus degradans (strain 2-40 / ATCC 43961 / DSM 17024) protein is Pantothenate synthetase.